Consider the following 195-residue polypeptide: COMM domain-containing protein 3 (195 aa).

The region spanning 124 to 193 is the COMM domain; sequence HITDVSWRLE…DASKSLERAT (70 aa).

It belongs to the COMM domain-containing protein 3 family. In terms of assembly, component of the commander complex consisting of the CCC subcomplex and the retriever subcomplex. Component of the CCC (COMMD/CCDC22/CCDC93) subcomplex consisting of COMMD1, COMMD2, COMMD3, COMMD4, COMMD5, COMMD6, COMMD7, COMMD8, COMMD9, COMMD10, CCDC22 and CCDC93; within the complex forms a heterodimer with COMMD2. Interacts with NFKB1/p105. Interacts with CCDC22, CCDC93, SCNN1B, CUL3, CUL4A, CUL4B, CUL5. As to expression, expressed in kidney collecting duct cells and in the nuclei of proximal convoluted tubule cells in the kidney cortex (at protein level).

It is found in the cytoplasm. The protein resides in the nucleus. In terms of biological role, scaffold protein in the commander complex that is essential for endosomal recycling of transmembrane cargos; the commander complex is composed of the CCC subcomplex and the retriever subcomplex. May modulate activity of cullin-RING E3 ubiquitin ligase (CRL) complexes. May down-regulate activation of NF-kappa-B. Modulates Na(+) transport in epithelial cells by regulation of apical cell surface expression of amiloride-sensitive sodium channel (ENaC) subunits. This is COMM domain-containing protein 3 (Commd3) from Rattus norvegicus (Rat).